Reading from the N-terminus, the 451-residue chain is UPF0210 protein NMB1652 (451 aa).

Belongs to the UPF0210 family. As to quaternary structure, homodimer.

This chain is UPF0210 protein NMB1652, found in Neisseria meningitidis serogroup B (strain ATCC BAA-335 / MC58).